Consider the following 303-residue polypeptide: UDP-N-acetylenolpyruvoylglucosamine reductase (303 aa).

An FAD-binding PCMH-type domain is found at 32–212 (IGGKADLFLN…EQETKEYLAK (181 aa)). R176 is an active-site residue. Residue S226 is the Proton donor of the active site. E296 is an active-site residue.

This sequence belongs to the MurB family. FAD serves as cofactor.

Its subcellular location is the cytoplasm. It carries out the reaction UDP-N-acetyl-alpha-D-muramate + NADP(+) = UDP-N-acetyl-3-O-(1-carboxyvinyl)-alpha-D-glucosamine + NADPH + H(+). Its pathway is cell wall biogenesis; peptidoglycan biosynthesis. Cell wall formation. The sequence is that of UDP-N-acetylenolpyruvoylglucosamine reductase from Desulforamulus reducens (strain ATCC BAA-1160 / DSM 100696 / MI-1) (Desulfotomaculum reducens).